A 57-amino-acid polypeptide reads, in one-letter code: MDVKIELSSYVRVLKLASTPSWNEFSQIGLIAGAGIVFVGFLGFLIFAIMTLLPGGV.

The helical transmembrane segment at 30-50 (LIAGAGIVFVGFLGFLIFAIM) threads the bilayer.

This sequence belongs to the SecE/SEC61-gamma family. In terms of assembly, component of the Sec protein translocase complex. Heterotrimer consisting of SecY (alpha), SecG (beta) and SecE (gamma) subunits. The heterotrimers can form oligomers, although 1 heterotrimer is thought to be able to translocate proteins. Interacts with the ribosome. May interact with SecDF, and other proteins may be involved.

It is found in the cell membrane. Functionally, essential subunit of the Sec protein translocation channel SecYEG. Clamps together the 2 halves of SecY. May contact the channel plug during translocation. This chain is Protein translocase subunit SecE, found in Haloquadratum walsbyi (strain DSM 16790 / HBSQ001).